We begin with the raw amino-acid sequence, 256 residues long: Distal membrane-arm assembly complex protein 2 (256 aa).

Serine 252 is modified (phosphoserine).

It belongs to the ATP synthase subunit s family. In terms of assembly, interacts with incompletely assembled mitochondrial NADH:ubiquinone oxidoreductase complex (complex I).

Its subcellular location is the mitochondrion. Required for the assembly of the mitochondrial NADH:ubiquinone oxidoreductase complex (complex I). Involved in the assembly of the distal region of complex I. This is Distal membrane-arm assembly complex protein 2 from Macaca fascicularis (Crab-eating macaque).